Consider the following 433-residue polypeptide: Serine hydroxymethyltransferase (433 aa).

Residues Leu-133 and 137–139 (GHL) contribute to the (6S)-5,6,7,8-tetrahydrofolate site. Lys-242 is modified (N6-(pyridoxal phosphate)lysine). 366–368 (SPF) is a (6S)-5,6,7,8-tetrahydrofolate binding site.

This sequence belongs to the SHMT family. Homodimer. Pyridoxal 5'-phosphate serves as cofactor.

It localises to the cytoplasm. It carries out the reaction (6R)-5,10-methylene-5,6,7,8-tetrahydrofolate + glycine + H2O = (6S)-5,6,7,8-tetrahydrofolate + L-serine. It functions in the pathway one-carbon metabolism; tetrahydrofolate interconversion. The protein operates within amino-acid biosynthesis; glycine biosynthesis; glycine from L-serine: step 1/1. Functionally, catalyzes the reversible interconversion of serine and glycine with tetrahydrofolate (THF) serving as the one-carbon carrier. This reaction serves as the major source of one-carbon groups required for the biosynthesis of purines, thymidylate, methionine, and other important biomolecules. Also exhibits THF-independent aldolase activity toward beta-hydroxyamino acids, producing glycine and aldehydes, via a retro-aldol mechanism. This is Serine hydroxymethyltransferase from Beijerinckia indica subsp. indica (strain ATCC 9039 / DSM 1715 / NCIMB 8712).